A 139-amino-acid polypeptide reads, in one-letter code: Actin-depolymerizing factor 6 (139 aa).

Residues 5 to 139 enclose the ADF-H domain; the sequence is ASGMAVGDEC…SMDIVKARAL (135 aa).

Belongs to the actin-binding proteins ADF family.

Its function is as follows. Actin-depolymerizing protein. Severs actin filaments (F-actin) and binds to actin monomers. The chain is Actin-depolymerizing factor 6 (ADF6) from Oryza sativa subsp. japonica (Rice).